A 407-amino-acid polypeptide reads, in one-letter code: Mitochondrial protein import protein mas5 (407 aa).

Residues 6-68 (KLYEVLNVDV…EKRATYDRFG (63 aa)) enclose the J domain. Residues leucine 110 and 129–131 (LAL) each bind substrate. Residues 124–207 (GKTTKLALQK…CDGAKVISQR (84 aa)) form a CR-type zinc finger. 8 residues coordinate Zn(2+): cysteine 137, cysteine 140, cysteine 153, cysteine 156, cysteine 179, cysteine 182, cysteine 195, and cysteine 198. CXXCXGXG motif repeat units lie at residues 137–144 (CPKCSGRG), 153–160 (CASCNGSG), 179–186 (CPDCNGAG), and 195–202 (CKECDGAK). Residues 209–210 (IL) and 241–243 (VIF) contribute to the substrate site. The disordered stretch occupies residues 375–407 (VRIDNNVDPTTATSMDEDEDEEGGHPGVQCAQQ). Cysteine 404 bears the Cysteine methyl ester mark. A lipid anchor (S-farnesyl cysteine) is attached at cysteine 404. Positions 405–407 (AQQ) are cleaved as a propeptide — removed in mature form.

As to quaternary structure, homodimer.

It is found in the cytoplasm. The protein localises to the nucleus. Its function is as follows. Probably involved in mitochondrial protein import. Plays a role in microtubule cytoskeleton organization. The chain is Mitochondrial protein import protein mas5 (mas5) from Schizosaccharomyces pombe (strain 972 / ATCC 24843) (Fission yeast).